Reading from the N-terminus, the 245-residue chain is Ninjurin-A (245 aa).

The Extracellular portion of the chain corresponds to 1-170; the sequence is MSNLEHITLE…TSSQHPYFYP (170 aa). N19 and N28 each carry an N-linked (GlcNAc...) asparagine glycan. Positions 32 to 101 are disordered; the sequence is HSYGGAIDGR…NVNVNVPNGG (70 aa). Over residues 92 to 101 the composition is skewed to low complexity; that stretch reads NVNVNVPNGG. The tract at residues 135–146 is helix alpha1; the sequence is KKTLAQGMMDLA. The helix alpha2 stretch occupies residues 149-165; the sequence is SANANQLRYVLETSSQH. The helical transmembrane segment at 171–191 threads the bilayer; that stretch reads SLLFISLSIIFQIAVGVGLIL. Topologically, residues 192–211 are cytoplasmic; it reads NGQYNIKNGHDICRANRINN. Residues 212–232 form a helical membrane-spanning segment; it reads YTVSGIFIVTVVNVLISAFTV. At 233 to 245 the chain is on the extracellular side; the sequence is DRDTVPALPANTT.

Belongs to the ninjurin family. Homooligomer. In terms of processing, cleaved by Mmp1 protease to generate the Secreted ninjurin-A form.

It is found in the cell membrane. It localises to the secreted. In terms of biological role, effector of non-apoptotic necrotic cell death that mediates plasma membrane rupture (cytolysis): oligomerizes in response to death stimuli and promotes plasma membrane rupture by introducing hydrophilic faces of 2 alpha helices into the hydrophobic membrane, leading to release intracellular molecules that propagate the inflammatory response. Also acts as a homophilic transmembrane adhesion molecule that promotes cell adhesion by mediating homophilic interactions via its extracellular region. Functionally, secreted form generated by cleavage, which acts as a negative regulator of cell adhesion. Promotes the loss of cell adhesion in a cell non-autonomous manner. The chain is Ninjurin-A from Drosophila melanogaster (Fruit fly).